We begin with the raw amino-acid sequence, 198 residues long: Recombination protein RecR (198 aa).

The C4-type zinc-finger motif lies at 56 to 71 (CDICGNVSEEPTCRIC). Positions 79–175 (AVVCVVEEPK…NVTRLASGLP (97 aa)) constitute a Toprim domain.

This sequence belongs to the RecR family.

May play a role in DNA repair. It seems to be involved in an RecBC-independent recombinational process of DNA repair. It may act with RecF and RecO. The polypeptide is Recombination protein RecR (Saccharopolyspora erythraea (strain ATCC 11635 / DSM 40517 / JCM 4748 / NBRC 13426 / NCIMB 8594 / NRRL 2338)).